The sequence spans 72 residues: Translation initiation factor IF-1 (72 aa).

In terms of domain architecture, S1-like spans 1-72 (MAKEEMLEFP…TKGRINYRFK (72 aa)).

This sequence belongs to the IF-1 family. As to quaternary structure, component of the 30S ribosomal translation pre-initiation complex which assembles on the 30S ribosome in the order IF-2 and IF-3, IF-1 and N-formylmethionyl-tRNA(fMet); mRNA recruitment can occur at any time during PIC assembly.

It is found in the cytoplasm. Its function is as follows. One of the essential components for the initiation of protein synthesis. Stabilizes the binding of IF-2 and IF-3 on the 30S subunit to which N-formylmethionyl-tRNA(fMet) subsequently binds. Helps modulate mRNA selection, yielding the 30S pre-initiation complex (PIC). Upon addition of the 50S ribosomal subunit IF-1, IF-2 and IF-3 are released leaving the mature 70S translation initiation complex. In Jannaschia sp. (strain CCS1), this protein is Translation initiation factor IF-1.